Consider the following 326-residue polypeptide: Putative ABC transporter ATP-binding protein MPN_334 (326 aa).

One can recognise an ABC transporter domain in the interval 7–239 (VEVKHLEKEF…NFGYRLKVNN (233 aa)). 42 to 49 (GQNGAGKT) is an ATP binding site.

This sequence belongs to the ABC transporter superfamily.

The protein is Putative ABC transporter ATP-binding protein MPN_334 of Mycoplasma pneumoniae (strain ATCC 29342 / M129 / Subtype 1) (Mycoplasmoides pneumoniae).